Reading from the N-terminus, the 236-residue chain is Thioredoxin-like 2-2, chloroplastic (236 aa).

The N-terminal 82 residues, 1 to 82 (MAGVVRLTTT…LRRPKSQVVR (82 aa)), are a transit peptide targeting the chloroplast. Residues 83-220 (VKVDENVAET…QLELGITLQT (138 aa)) form the Thioredoxin domain. Residues cysteine 135 and cysteine 138 each act as nucleophile in the active site. A disulfide bridge links cysteine 135 with cysteine 138.

Belongs to the thioredoxin family.

It localises to the plastid. It is found in the chloroplast. Thiol-disulfide oxidoreductase that may participate in various redox reactions. Possesses insulin disulfide bonds reducing activity. The sequence is that of Thioredoxin-like 2-2, chloroplastic from Arabidopsis thaliana (Mouse-ear cress).